A 146-amino-acid chain; its full sequence is Large ribosomal subunit protein bL19 (146 aa).

Residues 116–146 (ADRKRIDQDRAAERAAKEEAQKAQEPKASQE) form a disordered region. Residues 119–146 (KRIDQDRAAERAAKEEAQKAQEPKASQE) show a composition bias toward basic and acidic residues.

As to quaternary structure, part of the 50S risobomal subunit. Contacts protein L14. Forms a bridge to the 30S subunit in the 70S ribosome, contacting the 16S rRNA.

In terms of biological role, contacts the 16S rRNA of the 30S subunit (part of bridge B6), connecting the 2 subunits. The sequence is that of Large ribosomal subunit protein bL19 (rplS) from Thermus thermophilus (strain ATCC 27634 / DSM 579 / HB8).